The following is a 205-amino-acid chain: Putative epidermin response regulator (205 aa).

A DNA-binding region (ompR/PhoB-type) is located at residues 103-200 (KYIKYVNDDF…ERKLGYKILI (98 aa)).

This sequence to the C-terminus of E.coli phosphate regulon transcriptional regulatory protein PhoB.

This chain is Putative epidermin response regulator (epiQ), found in Staphylococcus epidermidis.